Reading from the N-terminus, the 240-residue chain is uncharacterized protein (240 aa).

An N-terminal signal peptide occupies residues Met-1–Ala-18. Asn-127 is a glycosylation site (N-linked (GlcNAc...) asparagine). A helical membrane pass occupies residues Gly-215–Gly-235.

It localises to the membrane. This is an uncharacterized protein from Caenorhabditis elegans.